We begin with the raw amino-acid sequence, 931 residues long: GPI ethanolamine phosphate transferase 1 (931 aa).

Residue methionine 1 is a topological domain, cytoplasmic. The chain crosses the membrane as a helical span at residues 2 to 24 (LLFFTLGLLIHFVFFASIFDIYF). Topologically, residues 25 to 442 (TSPLVHGMTP…SYYHTYDRFF (418 aa)) are lumenal. 3 N-linked (GlcNAc...) asparagine glycosylation sites follow: asparagine 128, asparagine 192, and asparagine 350. A helical transmembrane segment spans residues 443 to 463 (LGVNVVIGFVGWISYASLLII). Over 464–482 (KSHSNLIKGVSKEVKKPSH) the chain is Cytoplasmic. A helical transmembrane segment spans residues 483–503 (LLPCSFVAIGILVAFFLLIQA). The Lumenal portion of the chain corresponds to 504-508 (CPWTY). The chain crosses the membrane as a helical span at residues 509-529 (YVYGLLPLPIWYAVLREFQVI). The Cytoplasmic portion of the chain corresponds to 530–543 (QDLVVSVLTYPLSH). Residues 544 to 564 (FVGYLLAFTLGIEVLVLSFFY) traverse the membrane as a helical segment. Position 565 (arginine 565) is a topological domain, lumenal. The chain crosses the membrane as a helical span at residues 566 to 586 (YMLTAGLTAFAAWPFLTRLWT). The Cytoplasmic segment spans residues 587–591 (RAKMT). A helical transmembrane segment spans residues 592 to 612 (SLSWTFFSLLLAVFPLMPVVG). Residues 613–618 (RKPDIS) are Lumenal-facing. Residues 619–639 (LVMGAGLLVLLLSLCVVTSLM) form a helical membrane-spanning segment. The Cytoplasmic segment spans residues 640 to 649 (KRKDSFIKEE). Residues 650–670 (LLVHLLQVLSTVLSMYVVYST) form a helical membrane-spanning segment. The Lumenal portion of the chain corresponds to 671–685 (QSSLLRKQGLPLMNQ). A helical transmembrane segment spans residues 686 to 706 (IISWATLASSLVVPLLSSPVL). Over 707 to 723 (FQRLFSILLSLMSTYLL) the chain is Cytoplasmic. A helical membrane pass occupies residues 724–744 (LSTGYEALFPLVLSCLMFVWI). The Lumenal portion of the chain corresponds to 745–786 (NIEQETLQQSGVCCKQKLTSIQFSYNTDITQFRQLYLDDIRR). Residues 787–807 (AFFLVFFLVTAFFGTGNIASI) traverse the membrane as a helical segment. At 808–824 (NSFDLASVYCFLTVFSP) the chain is on the cytoplasmic side. The helical transmembrane segment at 825 to 845 (FMMGALMMWKILIPFVLVMCA) threads the bilayer. Over 846 to 858 (FEAVQLTTQLSSK) the chain is Lumenal. A helical membrane pass occupies residues 859 to 879 (SLFLIVLVISDIMALHFFFLV). The Cytoplasmic portion of the chain corresponds to 880 to 894 (KDYGSWLDIGTSISH). Residues 895 to 915 (YVIVMSMTIFLVFLNGLAQLL) traverse the membrane as a helical segment. Over 916-931 (TTKKLRLCGKPKSHFM) the chain is Lumenal.

The protein belongs to the PIGG/PIGN/PIGO family. PIGN subfamily.

Its subcellular location is the endoplasmic reticulum membrane. Its pathway is glycolipid biosynthesis; glycosylphosphatidylinositol-anchor biosynthesis. In terms of biological role, ethanolamine phosphate transferase that catalyzes an ethanolamine phosphate (EtNP) transfer from phosphatidylethanolamine (PE) to the 2-OH position of the first alpha-1,4-linked mannose of the alpha-D-Man-(1-&gt;6)-alpha-D-Man-(1-&gt;4)-alpha-D-GlcN-(1-&gt;6)-(1-radyl,2-acyl-sn-glycero-3-phospho)-2-acyl-inositol (also termed H3) intermediate to generate an alpha-D-Man-(1-&gt;6)-2-PEtn-alpha-D-Man-(1-&gt;4)-alpha-D-GlcN-(1-&gt;6)-(1-radyl,2-acyl-sn-glycero-3-phospho)-2-acyl-inositol and participates in the eighth step of the glycosylphosphatidylinositol-anchor biosynthesis. May act as suppressor of replication stress and chromosome missegregation. The protein is GPI ethanolamine phosphate transferase 1 of Homo sapiens (Human).